We begin with the raw amino-acid sequence, 188 residues long: Putative lipoprotein LprB (188 aa).

A signal peptide spans 1–27 (MRCDVRALALAARGLIELMIVIPMVAG). Cys-28 carries the N-palmitoyl cysteine lipid modification. Residue Cys-28 is the site of S-diacylglycerol cysteine attachment.

The protein resides in the cell membrane. The sequence is that of Putative lipoprotein LprB (lprB) from Mycobacterium leprae (strain TN).